Here is a 517-residue protein sequence, read N- to C-terminus: GMP synthase [glutamine-hydrolyzing] (517 aa).

The 192-residue stretch at 11 to 202 (KIIVLDYGSQ…AFDVCHAEAN (192 aa)) folds into the Glutamine amidotransferase type-1 domain. Residue cysteine 88 is the Nucleophile of the active site. Residues histidine 176 and glutamate 178 contribute to the active site. Positions 203–392 (WSMDDFITKQ…LGMPHSLVWR (190 aa)) constitute a GMPS ATP-PPase domain. ATP is bound at residue 230-236 (SGGVDSS).

As to quaternary structure, homodimer.

It catalyses the reaction XMP + L-glutamine + ATP + H2O = GMP + L-glutamate + AMP + diphosphate + 2 H(+). It functions in the pathway purine metabolism; GMP biosynthesis; GMP from XMP (L-Gln route): step 1/1. In terms of biological role, catalyzes the synthesis of GMP from XMP. The protein is GMP synthase [glutamine-hydrolyzing] (guaA) of Lacticaseibacillus rhamnosus (Lactobacillus rhamnosus).